The sequence spans 309 residues: Ornithine carbamoyltransferase (309 aa).

Residues 51–54 (STRT), Gln78, Arg102, and 129–132 (HPVQ) each bind carbamoyl phosphate. Residues Asn160, Asp224, and 228–229 (SM) contribute to the L-ornithine site. Carbamoyl phosphate is bound by residues 264–265 (CL) and Arg292.

The protein belongs to the aspartate/ornithine carbamoyltransferase superfamily. OTCase family.

It localises to the cytoplasm. The catalysed reaction is carbamoyl phosphate + L-ornithine = L-citrulline + phosphate + H(+). It functions in the pathway amino-acid biosynthesis; L-arginine biosynthesis; L-arginine from L-ornithine and carbamoyl phosphate: step 1/3. Its function is as follows. Reversibly catalyzes the transfer of the carbamoyl group from carbamoyl phosphate (CP) to the N(epsilon) atom of ornithine (ORN) to produce L-citrulline. The polypeptide is Ornithine carbamoyltransferase (Campylobacter fetus subsp. fetus (strain 82-40)).